A 165-amino-acid polypeptide reads, in one-letter code: Chorismate pyruvate-lyase (165 aa).

Residues Met35, Arg77, Leu115, and Glu156 each coordinate substrate.

Belongs to the UbiC family. As to quaternary structure, monomer.

It localises to the cytoplasm. The catalysed reaction is chorismate = 4-hydroxybenzoate + pyruvate. It functions in the pathway cofactor biosynthesis; ubiquinone biosynthesis. Removes the pyruvyl group from chorismate, with concomitant aromatization of the ring, to provide 4-hydroxybenzoate (4HB) for the ubiquinone pathway. This chain is Chorismate pyruvate-lyase, found in Escherichia coli O157:H7.